The following is a 571-amino-acid chain: DDB1- and CUL4-associated factor 11 homolog (571 aa).

The segment at 51–75 is disordered; sequence RMKPNHSNDSDTDFSSDDEGCPKMT. The segment covering 60–69 has biased composition (acidic residues); sequence SDTDFSSDDE. WD repeat units follow at residues 162–201, 266–305, 309–349, 357–396, 435–479, and 482–521; these read RVATKSFCTQYIQNGTKIVVASQDEKIRFYQRNPDKSKYR, RDHCAVFCVKFSDSSEQIVCGTSQYSIHVFDVEQRRRIRT, AHED…DGDV, GHRDGVTHVDSRQDERYLLSNSKDQTIKVWDLRKFSNMSG, GHSV…VSRR, and GHTAVVRECDWHPTENEIVSSAWDGVTTVWTWDERQEGVI.

The protein belongs to the WD repeat LEC14B family.

Involved in regulation of lifespan. Required for dopaminergic CEP neuron degeneration in response to Mn(2+). Inhibits the skn-1-mediated up-regulation of tatn-1. This Caenorhabditis elegans protein is DDB1- and CUL4-associated factor 11 homolog.